Here is a 155-residue protein sequence, read N- to C-terminus: MYQKRQAPTLSSKEAAIQLLSRRDHGLYELHQKLAMKGYEEADIEAAINFCLEHNYLDDLRYAKSQVRQHVYKGHGERRIRQELNQKRVAESVIEQAMAEEPQDWFELAKLAAEKKFKGIKAKDQKEYAKQVRFLQYRGYSFDQISYALSFEDED.

Belongs to the RecX family.

It is found in the cytoplasm. In terms of biological role, modulates RecA activity. This chain is Regulatory protein RecX, found in Vibrio parahaemolyticus serotype O3:K6 (strain RIMD 2210633).